A 100-amino-acid polypeptide reads, in one-letter code: Urease subunit gamma (100 aa).

This sequence belongs to the urease gamma subunit family. In terms of assembly, heterotrimer of UreA (gamma), UreB (beta) and UreC (alpha) subunits. Three heterotrimers associate to form the active enzyme.

Its subcellular location is the cytoplasm. The enzyme catalyses urea + 2 H2O + H(+) = hydrogencarbonate + 2 NH4(+). The protein operates within nitrogen metabolism; urea degradation; CO(2) and NH(3) from urea (urease route): step 1/1. The polypeptide is Urease subunit gamma (Cyanothece sp. (strain PCC 7425 / ATCC 29141)).